A 231-amino-acid chain; its full sequence is Large ribosomal subunit protein uL1 (231 aa).

Belongs to the universal ribosomal protein uL1 family. As to quaternary structure, part of the 50S ribosomal subunit.

In terms of biological role, binds directly to 23S rRNA. The L1 stalk is quite mobile in the ribosome, and is involved in E site tRNA release. Protein L1 is also a translational repressor protein, it controls the translation of the L11 operon by binding to its mRNA. This is Large ribosomal subunit protein uL1 from Halalkalibacterium halodurans (strain ATCC BAA-125 / DSM 18197 / FERM 7344 / JCM 9153 / C-125) (Bacillus halodurans).